Reading from the N-terminus, the 270-residue chain is SPbeta prophage-derived DNA ligase-like protein LigB (270 aa).

Lys25 (N6-AMP-lysine intermediate) is an active-site residue.

This sequence belongs to the ATP-dependent DNA ligase family.

The sequence is that of SPbeta prophage-derived DNA ligase-like protein LigB (ligB) from Bacillus subtilis (strain 168).